The sequence spans 24 residues: MKKTTIIMMGVAIIVVLGTELGWW.

The Cytoplasmic segment spans residues Met-1 to Lys-3. A helical transmembrane segment spans residues Thr-4–Trp-24.

It localises to the cell inner membrane. This is an uncharacterized protein from Escherichia coli (strain K12).